A 194-amino-acid chain; its full sequence is Large ribosomal subunit protein bL17 (194 aa).

Positions 126 to 194 are disordered; sequence AEPKQTKART…SPEQTNKQEE (69 aa). Basic residues predominate over residues 131-140; sequence TKARTRRGKG. 2 stretches are compositionally biased toward polar residues: residues 144-161 and 181-194; these read ATTTVSSEKTQPNTQDMA and LDTQSPEQTNKQEE.

It belongs to the bacterial ribosomal protein bL17 family. As to quaternary structure, part of the 50S ribosomal subunit. Contacts protein L32.

This Amoebophilus asiaticus (strain 5a2) protein is Large ribosomal subunit protein bL17.